A 790-amino-acid polypeptide reads, in one-letter code: Choline transporter-like 2 (790 aa).

A helical transmembrane segment spans residues 47 to 67 (PCLFLFVTFLCAWGYVAYYAV). N-linked (GlcNAc...) asparagine glycans are attached at residues asparagine 102 and asparagine 259. The next 3 membrane-spanning stretches (helical) occupy residues 288–308 (IITP…FQMI), 319–339 (ILVF…MLRW), and 344–364 (LVWI…YYSF). Residue asparagine 384 is glycosylated (N-linked (GlcNAc...) asparagine). 2 helical membrane passes run 400 to 420 (LWIL…VLVL) and 449 to 469 (LVPW…LLFL). The N-linked (GlcNAc...) asparagine glycan is linked to asparagine 483. The next 4 membrane-spanning stretches (helical) occupy residues 545–565 (VIGF…VLAF), 592–612 (VYYH…CKII), 691–711 (VTGF…AAVT), and 728–748 (FVPA…FFSV).

This sequence belongs to the CTL (choline transporter-like) family.

It is found in the membrane. The chain is Choline transporter-like 2 from Anopheles gambiae (African malaria mosquito).